Consider the following 363-residue polypeptide: Fructose-bisphosphate aldolase 2 (363 aa).

Serine 61 contacts D-glyceraldehyde 3-phosphate. Catalysis depends on aspartate 109, which acts as the Proton donor. The Zn(2+) site is built by histidine 110, aspartate 144, glutamate 174, and histidine 226. Glycine 227 serves as a coordination point for dihydroxyacetone phosphate. Histidine 264 is a Zn(2+) binding site. Residue 265-267 participates in dihydroxyacetone phosphate binding; sequence GGS.

Belongs to the class II fructose-bisphosphate aldolase family. As to quaternary structure, homodimer. It depends on Zn(2+) as a cofactor.

The catalysed reaction is beta-D-fructose 1,6-bisphosphate = D-glyceraldehyde 3-phosphate + dihydroxyacetone phosphate. It participates in carbohydrate degradation; glycolysis; D-glyceraldehyde 3-phosphate and glycerone phosphate from D-glucose: step 4/4. Functionally, catalyzes the aldol condensation of dihydroxyacetone phosphate (DHAP or glycerone-phosphate) with glyceraldehyde 3-phosphate (G3P) to form fructose 1,6-bisphosphate (FBP) in gluconeogenesis and the reverse reaction in glycolysis. The protein is Fructose-bisphosphate aldolase 2 (FBA2) of Paracoccidioides lutzii (strain ATCC MYA-826 / Pb01) (Paracoccidioides brasiliensis).